The sequence spans 265 residues: Undecaprenyl-diphosphatase (265 aa).

7 helical membrane passes run 38-58 (RSDF…CLAL), 75-95 (RDYV…GLIV), 108-128 (PVAW…HFAG), 135-155 (VVTW…GVFP), 181-201 (FVFM…LLEM), 215-235 (VAVA…WLLG), and 244-264 (VFAV…PAAA).

It belongs to the UppP family.

Its subcellular location is the cell inner membrane. The catalysed reaction is di-trans,octa-cis-undecaprenyl diphosphate + H2O = di-trans,octa-cis-undecaprenyl phosphate + phosphate + H(+). Catalyzes the dephosphorylation of undecaprenyl diphosphate (UPP). Confers resistance to bacitracin. This chain is Undecaprenyl-diphosphatase, found in Xanthomonas axonopodis pv. citri (strain 306).